An 829-amino-acid chain; its full sequence is pre-rRNA 2'-O-ribose RNA methyltransferase FTSJ3 (829 aa).

5 residues coordinate S-adenosyl-L-methionine: G56, W58, D76, D92, and D117. The active-site Proton acceptor is K157. A disordered region spans residues 332-367 (ISLSSEEEGDEEESAAETKQASEEEEEREEEEQLNR). A phosphoserine mark is found at S333, S335, S336, S345, and S353. Residues 336-346 (SEEEGDEEESA) show a composition bias toward acidic residues. A compositionally biased stretch (acidic residues) spans 354–363 (EEEEEREEEE). Position 389 is a citrulline (R389). Disordered regions lie at residues 443–508 (FLSD…PLLV) and 528–634 (DGFS…GFEV). The segment covering 456–473 (DAEDDDDTSLESDLDPEE) has biased composition (acidic residues). A phosphoserine mark is found at S531 and S544. K570 is covalently cross-linked (Glycyl lysine isopeptide (Lys-Gly) (interchain with G-Cter in SUMO2)). S575 carries the post-translational modification Phosphoserine. Residues K626 and K642 each participate in a glycyl lysine isopeptide (Lys-Gly) (interchain with G-Cter in SUMO2) cross-link. Position 659 is a phosphoserine (S659). K661 is covalently cross-linked (Glycyl lysine isopeptide (Lys-Gly) (interchain with G-Cter in SUMO2)). S671 is modified (phosphoserine). Residue K693 forms a Glycyl lysine isopeptide (Lys-Gly) (interchain with G-Cter in SUMO2) linkage. A coiled-coil region spans residues 722–760 (IKKVAEAKARKKRRMLKKLEQTKKKAEAVVNTVDISERE). The residue at position 766 (R766) is a Citrulline. The span at 794–804 (VRRPAGVRGHF) shows a compositional bias: basic residues. Residues 794–829 (VRRPAGVRGHFKVVDSRMKKDQRAQRKEQKRNHRRK) form a disordered region. The segment covering 805-820 (KVVDSRMKKDQRAQRK) has biased composition (basic and acidic residues).

Belongs to the class I-like SAM-binding methyltransferase superfamily. RNA methyltransferase RlmE family. SPB1 subfamily. Interacts with NIP7. Post-translationally, citrullinated by PADI4.

The protein resides in the nucleus. The protein localises to the nucleolus. The enzyme catalyses a ribonucleotide in rRNA + S-adenosyl-L-methionine = a 2'-O-methylribonucleotide in rRNA + S-adenosyl-L-homocysteine + H(+). In terms of biological role, RNA 2'-O-methyltransferase involved in the processing of the 34S pre-rRNA to 18S rRNA and in 40S ribosomal subunit formation. The protein is pre-rRNA 2'-O-ribose RNA methyltransferase FTSJ3 (Ftsj3) of Rattus norvegicus (Rat).